Here is a 281-residue protein sequence, read N- to C-terminus: 1-acyl-sn-glycerol-3-phosphate acyltransferase (281 aa).

Transmembrane regions (helical) follow at residues 40–60, 71–91, and 110–130; these read IFVCFAIVLITAVAWGLIMVL, LGNLYGHIIGGLVIWLYGIPI, and ASPIDAFFVMWLAPIGTVGVA. Positions 109 to 114 match the HXXXXD motif motif; that stretch reads HASPID.

This sequence belongs to the 1-acyl-sn-glycerol-3-phosphate acyltransferase family.

The protein resides in the membrane. The catalysed reaction is a 1-acyl-sn-glycero-3-phosphate + an acyl-CoA = a 1,2-diacyl-sn-glycero-3-phosphate + CoA. Its pathway is phospholipid metabolism; CDP-diacylglycerol biosynthesis; CDP-diacylglycerol from sn-glycerol 3-phosphate: step 2/3. Converts lysophosphatidic acid (LPA) into phosphatidic acid by incorporating acyl moiety at the 2 position. This enzyme uses erucoyl-CoA as an acyl donor. In Limnanthes alba (White meadowfoam), this protein is 1-acyl-sn-glycerol-3-phosphate acyltransferase.